The sequence spans 182 residues: Isopentenyl-diphosphate Delta-isomerase (182 aa).

Mn(2+) is bound by residues His25 and His32. A Nudix hydrolase domain is found at 30 to 164 (LLHLAFSSWL…PWAFSPWMVM (135 aa)). The active site involves Cys67. His69 serves as a coordination point for Mn(2+). Glu87 is a binding site for Mg(2+). Residues Glu114 and Glu116 each coordinate Mn(2+). Residue Glu116 is part of the active site.

The protein belongs to the IPP isomerase type 1 family. In terms of assembly, homodimer. Mg(2+) is required as a cofactor. Mn(2+) serves as cofactor.

The protein resides in the cytoplasm. The catalysed reaction is isopentenyl diphosphate = dimethylallyl diphosphate. The protein operates within isoprenoid biosynthesis; dimethylallyl diphosphate biosynthesis; dimethylallyl diphosphate from isopentenyl diphosphate: step 1/1. Functionally, catalyzes the 1,3-allylic rearrangement of the homoallylic substrate isopentenyl (IPP) to its highly electrophilic allylic isomer, dimethylallyl diphosphate (DMAPP). This Escherichia coli O17:K52:H18 (strain UMN026 / ExPEC) protein is Isopentenyl-diphosphate Delta-isomerase.